The primary structure comprises 132 residues: U11/U12 small nuclear ribonucleoprotein 25 kDa protein (132 aa).

The 92-residue stretch at 41–132 folds into the Ubiquitin-like domain; that stretch reads MTVRVCKMDG…VSFIKKLRQK (92 aa).

In terms of assembly, component of the U11/U12 snRNPs that are part of the U12-type spliceosome.

The protein localises to the nucleus. In Homo sapiens (Human), this protein is U11/U12 small nuclear ribonucleoprotein 25 kDa protein (SNRNP25).